Consider the following 87-residue polypeptide: MANIKSAQKRILVINKKTARNRMIKSQLKTAIRRFEESLAAGNFEEAKTRLKLVEKKLHQAAAKGTIHKAKASRKVSRLATKLNKAI.

It belongs to the bacterial ribosomal protein bS20 family.

In terms of biological role, binds directly to 16S ribosomal RNA. The chain is Small ribosomal subunit protein bS20 from Alkaliphilus oremlandii (strain OhILAs) (Clostridium oremlandii (strain OhILAs)).